We begin with the raw amino-acid sequence, 348 residues long: Ricin B-like lectin R40C1 (348 aa).

The tract at residues 1–26 (MFGFGHHGHHGQDQPPQHHGGGGGGA) is disordered. The Ricin B-type lectin domain maps to 199–345 (TVRIFCKADE…CEGDNQRWKI (147 aa)).

In terms of tissue distribution, expressed in roots and shoots.

In terms of biological role, lectin which binds carbohydrates in vitro. Interacts through its lectin domain with glycan structures containing specific motifs. In Oryza sativa subsp. japonica (Rice), this protein is Ricin B-like lectin R40C1.